A 752-amino-acid polypeptide reads, in one-letter code: MGIKVQRPRCFFDIAINNQPAGRVVFELFSDVCPKTCENFRCLCTGEKGTGKSTQKPLHYKSCLFHRVVKDFMVQGGDFSEGNGRGGESIYGGFFEDESFAVKHNKEFLLSMANRGKDTNGSQFFITTKPTPHLDGHHVVFGQVISGQEVVREIENQKTDAASKPFAEVRILSCGELIPKSKVKKEEKKRHKSSSSSSSSDSDSSSDSQSSSESSDSESASEEKSRKRKKKHRKNSRKHKKEKKKRKKSKKSPSSESEAENVDAQPQSTVRPEEIPPIPENRFLMRKSPPKADDKERKNRERERERECNPPNSQPASYQRRFLVTRSGRKIKGRGPRRYRTPSRSRSRDRFRRSETPPHWRQEMQRAQRMRVSSGERWIKGDKSELNEIKENQRSPVRVKEKKITDHRHMSESPNRKVEKEKKAKDHKSESKERDIRRNSEKDDKYNKNKVKKRGKSKSRSKSKERSKSKERDSKHSRHEDKRVRSRSKERDHETTKEKEKPLDPKGKDQERSRSKENSKQVESKSNEHDHSKSKEKDRRAQSRSRERDLTKSKHSYNSRTRERSRSRDRSRRVRSRSHDRDRSRSKEYHRYREQEYRRRGRSRSRDRRTPGRSRSKDRRRRRRDSRSSEREESQSRNKDKYRSQESKSSHRKENSEGEKRTYSKSRDHNSSSNNREKKADREQSPVSKTKQSSQDNEVKSSTLKNQEDEKTRSPVEKENQKSKGQENDHVHDKNKKCDHESSPGTDEDKSG.

The PPIase cyclophilin-type domain maps to 11 to 176 (FFDIAINNQP…AEVRILSCGE (166 aa)). Residues 182 to 193 (KVKKEEKKRHKS) are compositionally biased toward basic residues. Residues 182–752 (KVKKEEKKRH…SPGTDEDKSG (571 aa)) are disordered. The segment covering 194 to 214 (SSSSSSSDSDSSSDSQSSSES) has biased composition (low complexity). Over residues 226 to 251 (RKRKKKHRKNSRKHKKEKKKRKKSKK) the composition is skewed to basic residues. Residues Ser-252, Ser-254, Ser-255, Ser-257, and Ser-288 each carry the phosphoserine modification. Basic and acidic residues predominate over residues 290–308 (PKADDKERKNREREREREC). Ser-313 carries the post-translational modification Phosphoserine. The span at 327–345 (SGRKIKGRGPRRYRTPSRS) shows a compositional bias: basic residues. Composition is skewed to basic and acidic residues over residues 346–366 (RSRD…EMQR) and 377–447 (RWIK…DKYN). Ser-354 carries the phosphoserine modification. At Thr-356 the chain carries Phosphothreonine. The residue at position 384 (Ser-384) is a Phosphoserine. Lys-390 participates in a covalent cross-link: Glycyl lysine isopeptide (Lys-Gly) (interchain with G-Cter in SUMO2). 3 positions are modified to phosphoserine: Ser-395, Ser-411, and Ser-413. Residues 448–461 (KNKVKKRGKSKSRS) are compositionally biased toward basic residues. Composition is skewed to basic and acidic residues over residues 462 to 552 (KSKE…DLTK) and 577 to 598 (RSHD…QEYR). The segment covering 599 to 625 (RRGRSRSRDRRTPGRSRSKDRRRRRRD) has biased composition (basic residues). A compositionally biased stretch (basic and acidic residues) spans 626-684 (SRSSEREESQSRNKDKYRSQESKSSHRKENSEGEKRTYSKSRDHNSSSNNREKKADREQ). Residues Ser-685 and Ser-688 each carry the phosphoserine modification. Positions 685–705 (SPVSKTKQSSQDNEVKSSTLK) are enriched in polar residues. Residue Lys-691 forms a Glycyl lysine isopeptide (Lys-Gly) (interchain with G-Cter in SUMO2) linkage. Phosphoserine occurs at positions 694, 742, and 743. Positions 706-752 (NQEDEKTRSPVEKENQKSKGQENDHVHDKNKKCDHESSPGTDEDKSG) are enriched in basic and acidic residues. Thr-746 carries the post-translational modification Phosphothreonine. At Ser-751 the chain carries Phosphoserine.

As to quaternary structure, interacts with CLK1, PNN and with the phosphorylated C-terminal domain of RNA polymerase II.

It localises to the nucleus matrix. It is found in the nucleus speckle. It carries out the reaction [protein]-peptidylproline (omega=180) = [protein]-peptidylproline (omega=0). Inhibited by cyclosporin A (CsA). Its function is as follows. PPIase that catalyzes the cis-trans isomerization of proline imidic peptide bonds in oligopeptides and may therefore assist protein folding. May be implicated in the folding, transport, and assembly of proteins. May play an important role in the regulation of pre-mRNA splicing. The chain is Peptidyl-prolyl cis-trans isomerase G (Ppig) from Mus musculus (Mouse).